A 164-amino-acid polypeptide reads, in one-letter code: HTH-type transcriptional regulator IscR (164 aa).

In terms of domain architecture, HTH rrf2-type spans 2–131 (RLTSKGRYAV…NNITLDELVN (130 aa)). The H-T-H motif DNA-binding region spans 28–51 (LADISERQGISLSYLEQLFSRLRK). 3 residues coordinate [2Fe-2S] cluster: Cys-92, Cys-98, and Cys-104.

[2Fe-2S] cluster is required as a cofactor.

In terms of biological role, regulates the transcription of several operons and genes involved in the biogenesis of Fe-S clusters and Fe-S-containing proteins. This is HTH-type transcriptional regulator IscR from Pectobacterium carotovorum subsp. carotovorum (strain PC1).